The following is an 892-amino-acid chain: von Willebrand factor A domain-containing protein 7 (892 aa).

A signal peptide spans 1-27 (MLPVEVPLSQLGPPVLLLQLLLPPTSA). N54 carries an N-linked (GlcNAc...) asparagine glycan. Positions 231-272 (YFGTNPPKPPGKCSHGGRFDQSSSQPPRGGINKDSTSPSFSP) are disordered. The 183-residue stretch at 313-495 (ASSLSFVLDT…HIRDVAAVVG (183 aa)) folds into the VWFA domain.

The protein resides in the secreted. The polypeptide is von Willebrand factor A domain-containing protein 7 (Vwa7) (Rattus norvegicus (Rat)).